Reading from the N-terminus, the 270-residue chain is Cyclic pyranopterin monophosphate synthase, mitochondrial (270 aa).

Residues 1–32 (MISTLRRAVFLRRFPAVVSPIKRAFSSRIDDE) constitute a mitochondrion transit peptide. Residues 187-189 (LCH) and 225-226 (ME) each bind substrate. Asp-240 is an active-site residue.

This sequence belongs to the MoaC family. In terms of assembly, homohexamer. As to expression, abundantly expressed in the roots.

It localises to the mitochondrion matrix. It carries out the reaction (8S)-3',8-cyclo-7,8-dihydroguanosine 5'-triphosphate = cyclic pyranopterin phosphate + diphosphate. The protein operates within cofactor biosynthesis; molybdopterin biosynthesis. Its function is as follows. Catalyzes the conversion of (8S)-3',8-cyclo-7,8-dihydroguanosine 5'-triphosphate to cyclic pyranopterin monophosphate (cPMP). The sequence is that of Cyclic pyranopterin monophosphate synthase, mitochondrial (CNX3) from Arabidopsis thaliana (Mouse-ear cress).